A 566-amino-acid chain; its full sequence is Osteoclast stimulatory transmembrane protein (566 aa).

Over 1–51 (MPGHPGAAEQLVKTGWRSWHLGFWKALAPLQAAWDAFSQPVPASCGQLLTQ) the chain is Cytoplasmic. A helical membrane pass occupies residues 52–72 (LLLCASLAAAAAGLVYHWLAS). At 73–81 (LLLYPPGPS) the chain is on the extracellular side. A helical transmembrane segment spans residues 82–102 (AMVATVCGLLVFLSLGLVPPV). Over 103–128 (RCLFALSVPTLGMEQGRRLLLSYSTA) the chain is Cytoplasmic. The chain crosses the membrane as a helical span at residues 129–149 (TLAIAVVPNVLANVGAAGQVL). Residues 150-227 (RCVTEGSLES…ARAAALGTQR (78 aa)) lie on the Extracellular side of the membrane. A helical membrane pass occupies residues 228–248 (VVTGLFMLGLLVESAWYLHCY). The Cytoplasmic segment spans residues 249–304 (LTDLRFDNIYATQQLTQRLAQAQATHLLAPPPTWLLQAAQLRLSQEELLSCLLRLG). The helical transmembrane segment at 305–325 (LLALLLVATAVAVATDHVAFL) threads the bilayer. Residues 326–398 (LAQATVDWAQ…CPLLPARRPR (73 aa)) lie on the Extracellular side of the membrane. Residues 399-419 (AAAPLAAGALQLLAGSTVLLE) traverse the membrane as a helical segment. Residues 420–566 (AYARRLRHAI…EGNTGHDRPG (147 aa)) lie on the Cytoplasmic side of the membrane.

The protein resides in the membrane. Functionally, probable cell surface receptor that plays a role in cellular fusion and cell differentiation. Cooperates with DCSTAMP in modulating cell-cell fusion in both osteoclasts and foreign body giant cells (FBGCs). Involved in osteoclast bone resorption. Promotes osteoclast differentiation and may play a role in the multinucleated osteoclast maturation. In Homo sapiens (Human), this protein is Osteoclast stimulatory transmembrane protein (OCSTAMP).